The sequence spans 300 residues: UDP-N-acetylenolpyruvoylglucosamine reductase (300 aa).

Residues 28-193 (KTGGPADVLA…LQATFALEKG (166 aa)) form the FAD-binding PCMH-type domain. Arg172 is a catalytic residue. Ser222 functions as the Proton donor in the catalytic mechanism. Residue Glu292 is part of the active site.

This sequence belongs to the MurB family. FAD is required as a cofactor.

It localises to the cytoplasm. The enzyme catalyses UDP-N-acetyl-alpha-D-muramate + NADP(+) = UDP-N-acetyl-3-O-(1-carboxyvinyl)-alpha-D-glucosamine + NADPH + H(+). It functions in the pathway cell wall biogenesis; peptidoglycan biosynthesis. Functionally, cell wall formation. This chain is UDP-N-acetylenolpyruvoylglucosamine reductase, found in Enterococcus faecalis (strain ATCC 700802 / V583).